The sequence spans 478 residues: MIEVLLVTICLAVFPYPGSSIILESGNVDDYEVVYPQKLTALPKGAVQPKYEDAMQYEFKVNGEPVVLHLEKNKGLFSEDYSETHYSPDGREITTYPSVEDHCYYHGRIQNDADSTASISACDGLKGYFKLQGETYLIEPLELSDSEAHAVFKYENVEKEDEAPKMCGVTQNWESDESIKKASQLYLTPEQQRFPQRYIELAIVVDHGMYTKYSSNFKKIRKRVHQMVNNINEMYRPLNIAITLSLLDVWSEKDLITMQAVAPTTARLFGDWRETVLLKQKDHDHAQLLTDINFTGNTIGWAYMGGMCNAKNSVGIVKDHSSNVFMVAVTMTHEIGHNLGMEHDDKDKCKCEACIMSAVISDKPSKLFSDCSKDYYQTFLTNSKPQCIINAPLRTDTVSTPVSGNEFLEAGEECDCGSPSNPCCDAATCKLRPGAQCADGLCCDQCRFKKKRTICRRARGDNPDDRCTGQSADCPRNS.

An N-terminal signal peptide occupies residues 1–20 (MIEVLLVTICLAVFPYPGSS). A propeptide spanning residues 21 to 190 (IILESGNVDD…KASQLYLTPE (170 aa)) is cleaved from the precursor. Gln-191 carries the post-translational modification Pyrrolidone carboxylic acid. In terms of domain architecture, Peptidase M12B spans 197–392 (RYIELAIVVD…SKPQCIINAP (196 aa)). Ca(2+) is bound by residues Glu-200 and Asp-284. 3 disulfides stabilise this stretch: Cys-308/Cys-387, Cys-349/Cys-371, and Cys-351/Cys-354. Position 333 (His-333) interacts with Zn(2+). The active site involves Glu-334. Zn(2+) is bound by residues His-337 and His-343. Positions 387 and 390 each coordinate Ca(2+). The propeptide occupies 393-410 (LRTDTVSTPVSGNEFLEA). Residues 400 to 478 (TPVSGNEFLE…GQSADCPRNS (79 aa)) form the Disintegrin domain. 6 disulfide bridges follow: Cys-414/Cys-429, Cys-416/Cys-424, Cys-423/Cys-446, Cys-437/Cys-443, Cys-442/Cys-467, and Cys-455/Cys-474. Positions 459-461 (RGD) match the Cell attachment site motif. A disordered region spans residues 459-478 (RGDNPDDRCTGQSADCPRNS). Residues 468-478 (TGQSADCPRNS) show a composition bias toward polar residues.

This sequence belongs to the venom metalloproteinase (M12B) family. P-II subfamily. P-IIa sub-subfamily. Monomer. It depends on Zn(2+) as a cofactor. In terms of processing, not N-glycosylated. Expressed by the venom gland.

Its subcellular location is the secreted. It carries out the reaction Cleavage of 3-Asn-|-Gln-4, 10-His-|-Leu-11 and 14-Ala-|-Leu-15 in the insulin B chain, and the bond Z-Gly-Pro-|-Leu-Gly-Pro in a small molecule substrate of microbial collagenase.. In terms of biological role, zinc protease that induces hemorrhage. Its function is as follows. Inhibits platelet aggregation induced by ADP, thrombin, and collagen. Acts by inhibiting fibrinogen interaction with platelet receptors GPIIb/GPIIIa (ITGA2B/ITGB3). This Protobothrops flavoviridis (Habu) protein is Zinc metalloproteinase/disintegrin.